A 312-amino-acid polypeptide reads, in one-letter code: Ribosomal protein L11 methyltransferase (312 aa).

Positions 160, 181, 203, and 246 each coordinate S-adenosyl-L-methionine.

This sequence belongs to the methyltransferase superfamily. PrmA family.

Its subcellular location is the cytoplasm. The enzyme catalyses L-lysyl-[protein] + 3 S-adenosyl-L-methionine = N(6),N(6),N(6)-trimethyl-L-lysyl-[protein] + 3 S-adenosyl-L-homocysteine + 3 H(+). Functionally, methylates ribosomal protein L11. In Staphylococcus carnosus (strain TM300), this protein is Ribosomal protein L11 methyltransferase.